Consider the following 377-residue polypeptide: tRNA-specific 2-thiouridylase MnmA (377 aa).

ATP-binding positions include 18–25 (GMSGGVDS) and M44. The tract at residues 104–106 (NPD) is interaction with target base in tRNA. The Nucleophile role is filled by C109. Residues C109 and C209 are joined by a disulfide bond. G134 is an ATP binding site. Positions 159–161 (KDQ) are interaction with tRNA. Catalysis depends on C209, which acts as the Cysteine persulfide intermediate. The interaction with tRNA stretch occupies residues 324-325 (RY).

The protein belongs to the MnmA/TRMU family.

The protein resides in the cytoplasm. The catalysed reaction is S-sulfanyl-L-cysteinyl-[protein] + uridine(34) in tRNA + AH2 + ATP = 2-thiouridine(34) in tRNA + L-cysteinyl-[protein] + A + AMP + diphosphate + H(+). In terms of biological role, catalyzes the 2-thiolation of uridine at the wobble position (U34) of tRNA, leading to the formation of s(2)U34. The chain is tRNA-specific 2-thiouridylase MnmA from Photobacterium profundum (strain SS9).